We begin with the raw amino-acid sequence, 386 residues long: S-adenosylmethionine synthase (386 aa).

Histidine 16 provides a ligand contact to ATP. Mg(2+) is bound at residue aspartate 18. Glutamate 44 provides a ligand contact to K(+). L-methionine-binding residues include glutamate 57 and glutamine 100. The segment at 100 to 110 (QSPDINQGVDQ) is flexible loop. ATP contacts are provided by residues 164 to 166 (DGK), 230 to 231 (RF), aspartate 239, 245 to 246 (RK), alanine 262, and lysine 266. Aspartate 239 contacts L-methionine. Lysine 270 is a binding site for L-methionine.

This sequence belongs to the AdoMet synthase family. Homotetramer; dimer of dimers. Requires Mg(2+) as cofactor. K(+) is required as a cofactor.

It localises to the cytoplasm. The catalysed reaction is L-methionine + ATP + H2O = S-adenosyl-L-methionine + phosphate + diphosphate. Its pathway is amino-acid biosynthesis; S-adenosyl-L-methionine biosynthesis; S-adenosyl-L-methionine from L-methionine: step 1/1. Functionally, catalyzes the formation of S-adenosylmethionine (AdoMet) from methionine and ATP. The overall synthetic reaction is composed of two sequential steps, AdoMet formation and the subsequent tripolyphosphate hydrolysis which occurs prior to release of AdoMet from the enzyme. This chain is S-adenosylmethionine synthase, found in Nitratiruptor sp. (strain SB155-2).